Consider the following 161-residue polypeptide: MNQFGPSALINLSNFSSIKPEPASTPPQGSMANSTAVVKIPGTPGTGGRLSPENNQVLTKKKLQDLVREVDPNEQLDEDVEEMLLQIADDFIESVVTAACQLARHRKSSTLEVKDVQLHLERQWNMWIPGFGSEEIRPYKKACTTEAHKQRMALIRKTTKK.

Residues 15 to 55 (FSSIKPEPASTPPQGSMANSTAVVKIPGTPGTGGRLSPENN) are disordered. Lys-19 is covalently cross-linked (Glycyl lysine isopeptide (Lys-Gly) (interchain with G-Cter in SUMO2)). Positions 26–36 (PPQGSMANSTA) are enriched in polar residues. Position 43 is a phosphothreonine (Thr-43). The residue at position 51 (Ser-51) is a Phosphoserine. In terms of domain architecture, Histone-fold spans 56–128 (QVLTKKKLQD…HLERQWNMWI (73 aa)). Thr-59 is modified (phosphothreonine).

This sequence belongs to the TAF12 family. In terms of assembly, component of the TFIID basal transcription factor complex, composed of TATA-box-binding protein TBP, and a number of TBP-associated factors (TAFs), including TAF1, TAF2, TAF3, TAF4, TAF5, TAF6, TAF7, TAF8, TAF9, TAF10, TAF11, TAF12 and TAF13. Component of the TATA-binding protein-free TAF complex (TFTC), the PCAF histone acetylase complex and the STAGA transcription coactivator-HAT complex. Component of the PCAF complex, at least composed of TADA2L/ADA2, TADA3L/ADA3, TAF5L/PAF65-beta, SUPT3H, TAF6L, TAF9, TAF10, TAF12 and TRRAP. Component of the STAGA transcription coactivator-HAT complex, at least composed of SUPT3H, GCN5L2, TAF5L, TAF6L, STAF65-gamma/SUPT7L, TADA3L, TAD1L, TAF10, TAF12, TRRAP and TAF9. Interacts with ATF7 (via the transactivation domain); the interaction is prevented by sumoylation of ATF7.

The protein localises to the nucleus. The TFIID basal transcription factor complex plays a major role in the initiation of RNA polymerase II (Pol II)-dependent transcription. TFIID recognizes and binds promoters with or without a TATA box via its subunit TBP, a TATA-box-binding protein, and promotes assembly of the pre-initiation complex (PIC). The TFIID complex consists of TBP and TBP-associated factors (TAFs), including TAF1, TAF2, TAF3, TAF4, TAF5, TAF6, TAF7, TAF8, TAF9, TAF10, TAF11, TAF12 and TAF13. Component of the TATA-binding protein-free TAF complex (TFTC), the PCAF histone acetylase complex and the STAGA transcription coactivator-HAT complex. This is Transcription initiation factor TFIID subunit 12 (TAF12) from Bos taurus (Bovine).